Here is a 135-residue protein sequence, read N- to C-terminus: Large ribosomal subunit protein uL16 (135 aa).

It belongs to the universal ribosomal protein uL16 family. Part of the 50S ribosomal subunit.

Functionally, binds 23S rRNA and is also seen to make contacts with the A and possibly P site tRNAs. The chain is Large ribosomal subunit protein uL16 from Desulforapulum autotrophicum (strain ATCC 43914 / DSM 3382 / VKM B-1955 / HRM2) (Desulfobacterium autotrophicum).